An 85-amino-acid polypeptide reads, in one-letter code: COMM domain-containing protein 6 (85 aa).

At M1 the chain carries N-acetylmethionine. The region spanning 18–85 is the COMM domain; the sequence is QLVDFQWKLG…KEIAAVIETV (68 aa).

It belongs to the COMM domain-containing protein 6 family. In terms of assembly, component of the commander complex consisting of the CCC subcomplex and the retriever subcomplex. Component of the CCC (COMMD/CCDC22/CCDC93) subcomplex consisting of COMMD1, COMMD2, COMMD3, COMMD4, COMMD5, COMMD6, COMMD7, COMMD8, COMMD9, COMMD10, CCDC22 and CCDC93; within the complex forms a heterodimer with COMMD1. May form a homodimer with isoform 1. Interacts with RELA, RELB, NFKB1/p105. Does not interact with NFKBIB. Interacts with CCDC22, CCDC93, SCNN1B, CUL4A. Ubiquitous. Expressed in brain, heart, skeletal muscle, lung, pancreas, liver, kidney, small intestine and placenta.

The protein resides in the nucleus. Its subcellular location is the cytoplasm. In terms of biological role, scaffold protein in the commander complex that is essential for endosomal recycling of transmembrane cargos; the commander complex is composed of the CCC subcomplex and the retriever subcomplex. May modulate activity of cullin-RING E3 ubiquitin ligase (CRL) complexes. Down-regulates activation of NF-kappa-B. Inhibits TNF-induced NFKB1 activation. In Homo sapiens (Human), this protein is COMM domain-containing protein 6 (COMMD6).